A 213-amino-acid chain; its full sequence is Phosphatidylcholine transfer protein (213 aa).

N-acetylmethionine is present on Met-1. Residues 1–212 (MDPGAGAFSE…MVKACQNYKK (212 aa)) form the START domain. Tyr-72 and Arg-78 together coordinate a 1,2-diacyl-sn-glycero-3-phosphocholine. The residue at position 139 (Ser-139) is a Phosphoserine. Gln-157 is a binding site for a 1,2-diacyl-sn-glycero-3-phosphocholine. The tract at residues 171–176 (VFMYYF) is part of the binding site for phosphatidylcholine.

Interacts with ACOT13/THEM2.

The protein resides in the cytoplasm. Functionally, catalyzes the transfer of phosphatidylcholine between membranes. Binds phosphatidylcholine in a tight 1:1 stoichiometric complex. In Bos taurus (Bovine), this protein is Phosphatidylcholine transfer protein (PCTP).